Here is a 320-residue protein sequence, read N- to C-terminus: Lipoyl synthase (320 aa).

7 residues coordinate [4Fe-4S] cluster: Cys56, Cys61, Cys67, Cys82, Cys86, Cys89, and Ser295. A Radical SAM core domain is found at 68 to 284 (WNRRTATFMI…REEALKRGFA (217 aa)). Positions 300-320 (EQSAQAVARRTGAGRAAQTGD) are disordered. The span at 303–320 (AQAVARRTGAGRAAQTGD) shows a compositional bias: low complexity.

This sequence belongs to the radical SAM superfamily. Lipoyl synthase family. It depends on [4Fe-4S] cluster as a cofactor.

It is found in the cytoplasm. The catalysed reaction is [[Fe-S] cluster scaffold protein carrying a second [4Fe-4S](2+) cluster] + N(6)-octanoyl-L-lysyl-[protein] + 2 oxidized [2Fe-2S]-[ferredoxin] + 2 S-adenosyl-L-methionine + 4 H(+) = [[Fe-S] cluster scaffold protein] + N(6)-[(R)-dihydrolipoyl]-L-lysyl-[protein] + 4 Fe(3+) + 2 hydrogen sulfide + 2 5'-deoxyadenosine + 2 L-methionine + 2 reduced [2Fe-2S]-[ferredoxin]. It participates in protein modification; protein lipoylation via endogenous pathway; protein N(6)-(lipoyl)lysine from octanoyl-[acyl-carrier-protein]: step 2/2. Functionally, catalyzes the radical-mediated insertion of two sulfur atoms into the C-6 and C-8 positions of the octanoyl moiety bound to the lipoyl domains of lipoate-dependent enzymes, thereby converting the octanoylated domains into lipoylated derivatives. The sequence is that of Lipoyl synthase from Symbiobacterium thermophilum (strain DSM 24528 / JCM 14929 / IAM 14863 / T).